The primary structure comprises 227 residues: Large ribosomal subunit protein uL1 (227 aa).

The protein belongs to the universal ribosomal protein uL1 family. As to quaternary structure, part of the 50S ribosomal subunit.

Functionally, binds directly to 23S rRNA. The L1 stalk is quite mobile in the ribosome, and is involved in E site tRNA release. Its function is as follows. Protein L1 is also a translational repressor protein, it controls the translation of the L11 operon by binding to its mRNA. The sequence is that of Large ribosomal subunit protein uL1 from Brevibacillus brevis (strain 47 / JCM 6285 / NBRC 100599).